Reading from the N-terminus, the 28-residue chain is Seed allergenic protein 1 (28 aa).

Residues 1–28 (VTXEEGXYSISDQSKVGEQXIRSPDREM) are disordered.

The protein is Seed allergenic protein 1 of Prunus dulcis (Almond).